The primary structure comprises 890 residues: Alanine--tRNA ligase (890 aa).

Zn(2+) is bound by residues histidine 578, histidine 582, cysteine 689, and histidine 693.

It belongs to the class-II aminoacyl-tRNA synthetase family. It depends on Zn(2+) as a cofactor.

The protein localises to the cytoplasm. It carries out the reaction tRNA(Ala) + L-alanine + ATP = L-alanyl-tRNA(Ala) + AMP + diphosphate. In terms of biological role, catalyzes the attachment of alanine to tRNA(Ala) in a two-step reaction: alanine is first activated by ATP to form Ala-AMP and then transferred to the acceptor end of tRNA(Ala). Also edits incorrectly charged Ser-tRNA(Ala) and Gly-tRNA(Ala) via its editing domain. This is Alanine--tRNA ligase from Deinococcus radiodurans (strain ATCC 13939 / DSM 20539 / JCM 16871 / CCUG 27074 / LMG 4051 / NBRC 15346 / NCIMB 9279 / VKM B-1422 / R1).